Here is a 277-residue protein sequence, read N- to C-terminus: Caspase-3 (277 aa).

M1 carries the N-acetylmethionine modification. 2 consecutive propeptides follow at residues 1-9 (MENNKTSVD) and 10-28 (SKSI…KSMD). An N6-acetyllysine modification is found at K11. S26 carries the phosphoserine modification. Residues H121 and C163 contribute to the active site. C163 is subject to S-nitrosocysteine; in inhibited form.

It belongs to the peptidase C14A family. In terms of assembly, heterotetramer that consists of two anti-parallel arranged heterodimers, each one formed by a 17 kDa (p17) and a 12 kDa (p12) subunit. Interacts with BIRC6/bruce. As to quaternary structure, (Microbial infection) Subunit p17 interacts with African swine fever virus (ASFV) inhibitor of apoptosis protein. In terms of processing, cleavage by granzyme B, caspase-6, caspase-8 and caspase-10 generates the two active subunits. Additional processing of the propeptides is likely due to the autocatalytic activity of the activated protease. Active heterodimers between the small subunit of caspase-7 protease and the large subunit of caspase-3 also occur and vice versa. Post-translationally, S-nitrosylated on its catalytic site cysteine in unstimulated cell lines and denitrosylated upon activation of the Fas apoptotic pathway, associated with an increase in intracellular caspase activity. Fas therefore activates caspase-3 not only by inducing the cleavage of the caspase zymogen to its active subunits, but also by stimulating the denitrosylation of its active site thiol. Ubiquitinated by BIRC6; this activity is inhibited by DIABLO/SMAC.

The protein localises to the cytoplasm. It catalyses the reaction Strict requirement for an Asp residue at positions P1 and P4. It has a preferred cleavage sequence of Asp-Xaa-Xaa-Asp-|- with a hydrophobic amino-acid residue at P2 and a hydrophilic amino-acid residue at P3, although Val or Ala are also accepted at this position.. Inhibited by BIRC6; following inhibition of BIRC6-caspase binding by DIABLO/SMAC, BIRC6 is subjected to caspase cleavage, leading to an increase in active caspases. Functionally, involved in the activation cascade of caspases responsible for apoptosis execution. At the onset of apoptosis, it proteolytically cleaves poly(ADP-ribose) polymerase PARP1 at a '216-Asp-|-Gly-217' bond. Cleaves and activates sterol regulatory element binding proteins (SREBPs) between the basic helix-loop-helix leucine zipper domain and the membrane attachment domain. Cleaves and activates caspase-6, -7 and -9 (CASP6, CASP7 and CASP9, respectively). Cleaves and inactivates interleukin-18 (IL18). Triggers cell adhesion in sympathetic neurons through RET cleavage. Cleaves IL-1 beta between an Asp and an Ala, releasing the mature cytokine which is involved in a variety of inflammatory processes. Cleaves and inhibits serine/threonine-protein kinase AKT1 in response to oxidative stress. Acts as an inhibitor of type I interferon production during virus-induced apoptosis by mediating cleavage of antiviral proteins CGAS, IRF3 and MAVS, thereby preventing cytokine overproduction. Also involved in pyroptosis by mediating cleavage and activation of gasdermin-E (GSDME). Cleaves XRCC4 and phospholipid scramblase proteins XKR4, XKR8 and XKR9, leading to promote phosphatidylserine exposure on apoptotic cell surface. Cleaves BIRC6 following inhibition of BIRC6-caspase binding by DIABLO/SMAC. The chain is Caspase-3 (CASP3) from Sus scrofa (Pig).